A 602-amino-acid polypeptide reads, in one-letter code: MLRTHLAGSLRPEQAEQTVTLTGWVARRRDHGGVIFIDLRDASGVAQVVFRAGDVAEQAHRLRAEYCVRVTGTVEVRPEGNQNFEIPTGAIEVNATELEVLNESAPLPFQLDDQVGEEARLKYRYLDLRREGPGSAIRLRSKVSAAARGVLAHHEFVEVETPTLTRSTPEGARDFLVPSRLQPGSFYALPQSPQLFKQLLMVGGIERYYQIARCYRDEDFRADRQPEFTQLDIEMAFVNQDDIILLAEEILTALWKLVGHEIKTPIDRMTYTEAMRRYGSDKPDLRFDIELVECMDFFKDTTFRVFQAEYVGAVVMPGGASQPRKQLDAWQEWAKQRGAKGLAYVLVGEDGTLGGPVAKNLTDAEREGLAAHVGAQPGDCVFFAAGATKPMRALLGAARGEIARKKDLIDPDAWAFVWIVDAPMFEPTADATASGDVALGHSAWTAVHHAFTSPKPEFFDTFDTDPDSALAYAYDIVCNGNEIGGGSIRIHRKDIQERVFKVMGISEEEAQEQFGFLLDAFAFGAPPHGGIAFGWDRITALLAGMDSIREVIAFPKSGGGVDPLTDAPAPISAQQRKESGIDAKPEKKSEDKKSEGDTAEAK.

L-aspartate is bound at residue Glu170. The tract at residues 194–197 (QLFK) is aspartate. L-aspartate is bound at residue Arg216. ATP contacts are provided by residues 216-218 (RDE) and Gln225. His448 is an L-aspartate binding site. Glu482 is a binding site for ATP. Arg489 provides a ligand contact to L-aspartate. 534-537 (GWDR) contacts ATP. The disordered stretch occupies residues 559-602 (GGVDPLTDAPAPISAQQRKESGIDAKPEKKSEDKKSEGDTAEAK). The span at 575–602 (QRKESGIDAKPEKKSEDKKSEGDTAEAK) shows a compositional bias: basic and acidic residues.

It belongs to the class-II aminoacyl-tRNA synthetase family. Type 1 subfamily. In terms of assembly, homodimer.

It localises to the cytoplasm. The catalysed reaction is tRNA(Asx) + L-aspartate + ATP = L-aspartyl-tRNA(Asx) + AMP + diphosphate. Functionally, aspartyl-tRNA synthetase with relaxed tRNA specificity since it is able to aspartylate not only its cognate tRNA(Asp) but also tRNA(Asn). Reaction proceeds in two steps: L-aspartate is first activated by ATP to form Asp-AMP and then transferred to the acceptor end of tRNA(Asp/Asn). This chain is Aspartate--tRNA(Asp/Asn) ligase, found in Rhodococcus erythropolis (strain PR4 / NBRC 100887).